A 214-amino-acid polypeptide reads, in one-letter code: Glycerol-3-phosphate acyltransferase (214 aa).

Transmembrane regions (helical) follow at residues 4–24 (LIVA…IVSA), 52–72 (AAIL…WFVV), 82–102 (DTSV…PAFF), 118–138 (LAIN…VAFF), and 159–179 (FLFG…LLVW).

It belongs to the PlsY family. As to quaternary structure, probably interacts with PlsX.

The protein localises to the cell inner membrane. It carries out the reaction an acyl phosphate + sn-glycerol 3-phosphate = a 1-acyl-sn-glycero-3-phosphate + phosphate. Its pathway is lipid metabolism; phospholipid metabolism. Its function is as follows. Catalyzes the transfer of an acyl group from acyl-phosphate (acyl-PO(4)) to glycerol-3-phosphate (G3P) to form lysophosphatidic acid (LPA). This enzyme utilizes acyl-phosphate as fatty acyl donor, but not acyl-CoA or acyl-ACP. The protein is Glycerol-3-phosphate acyltransferase of Paraburkholderia xenovorans (strain LB400).